A 489-amino-acid polypeptide reads, in one-letter code: MDIRVYNTLSGKKEPLQPIEPNHVKLYVCGITSYDYCHIGHARSALAFDMIVRYLRYLDYKVTFVRNFTDIDDKIIARANETGVTAQALAERFIDEFHTDMDNLGTLRPDIEPKATEHIQEMIDIIQELVDKDMAYPSAGDVYYVVNSFPEYGKLSGRNIEDMQAGARISINEQKRNPMDFALWKASKPGEPSWESPWGPGRPGWHIECSAMSRKYLGENFDIHGGGKDLIFPHHENEIAQSEGANGKPFANTWIHHGFVTIKDEKMSKSLGNFLTIKDILDHYHPEILRAFIFSTQYRNPLDFSEIAMQDAETALVRLYECLHDIQQLAKGDPTLPALISAKDAAKLNSIETRFQEAMNNDFNTALALGVLYDAIKIINRAQRALTDTPSALDVKMLKGSMTLIQKLAGIVGLLQEDANLFLQQRKEKMLSGIDITEAEIESYIQQRLDARANKDWARSDEIRDILLEKGITLKDGADGTGWSVHRAN.

Residue Cys-29 participates in Zn(2+) binding. The short motif at 31–41 (ITSYDYCHIGH) is the 'HIGH' region element. Residues Cys-209, His-234, and Glu-238 each coordinate Zn(2+). Positions 266 to 270 (KMSKS) match the 'KMSKS' region motif. Lys-269 is an ATP binding site.

Belongs to the class-I aminoacyl-tRNA synthetase family. Monomer. Zn(2+) serves as cofactor.

It localises to the cytoplasm. The catalysed reaction is tRNA(Cys) + L-cysteine + ATP = L-cysteinyl-tRNA(Cys) + AMP + diphosphate. This Desulfotalea psychrophila (strain LSv54 / DSM 12343) protein is Cysteine--tRNA ligase.